Reading from the N-terminus, the 141-residue chain is Large-conductance mechanosensitive channel (141 aa).

3 helical membrane passes run phenylalanine 8 to glycine 28, isoleucine 38 to leucine 58, and glycine 80 to valine 100.

This sequence belongs to the MscL family. Homopentamer.

The protein resides in the cell inner membrane. Channel that opens in response to stretch forces in the membrane lipid bilayer. May participate in the regulation of osmotic pressure changes within the cell. The protein is Large-conductance mechanosensitive channel of Beijerinckia indica subsp. indica (strain ATCC 9039 / DSM 1715 / NCIMB 8712).